The chain runs to 163 residues: uncharacterized protein (163 aa).

This is an uncharacterized protein from Methanocaldococcus jannaschii (strain ATCC 43067 / DSM 2661 / JAL-1 / JCM 10045 / NBRC 100440) (Methanococcus jannaschii).